The primary structure comprises 196 residues: MEVILLERVAKLGQMGELVRVKDGYARNFLLPRGKALRATAANRDKYEHMKADLEARNIAAKAEAAKVAEKIDGHNVIVIRQASETGQLFGSVSVRDIVTSFEAEGVMISRSQILLDAPIKTIGKHAIEVAVHPEVEVGVSVTVARSAEEAERINRGEDISTRREDQDAAAEAIAAAGEFFDPDAVQDDEEQPVEQ.

This sequence belongs to the bacterial ribosomal protein bL9 family.

Its function is as follows. Binds to the 23S rRNA. The protein is Large ribosomal subunit protein bL9 of Rhodopseudomonas palustris (strain HaA2).